The chain runs to 171 residues: uncharacterized protein (171 aa).

Residues lysine 3–glutamine 171 enclose the PfpI endopeptidase domain.

Belongs to the peptidase C56 family.

This is an uncharacterized protein from Staphylococcus aureus (strain COL).